The chain runs to 333 residues: Glyceraldehyde-3-phosphate dehydrogenase 1 (333 aa).

NAD(+) is bound by residues 12 to 13 (RI), aspartate 35, and arginine 79. D-glyceraldehyde 3-phosphate contacts are provided by residues 152–154 (SCT), threonine 183, arginine 198, 211–212 (SG), and arginine 234. Residue cysteine 153 is the Nucleophile of the active site. Position 314 (asparagine 314) interacts with NAD(+).

It belongs to the glyceraldehyde-3-phosphate dehydrogenase family. In terms of assembly, homotetramer.

Its subcellular location is the cytoplasm. The catalysed reaction is D-glyceraldehyde 3-phosphate + phosphate + NAD(+) = (2R)-3-phospho-glyceroyl phosphate + NADH + H(+). The protein operates within carbohydrate degradation; glycolysis; pyruvate from D-glyceraldehyde 3-phosphate: step 1/5. Its activity is regulated as follows. Resistant to pentalenolactone (PL). Functionally, catalyzes the oxidative phosphorylation of glyceraldehyde 3-phosphate (G3P) to 1,3-bisphosphoglycerate (BPG) using the cofactor NAD. The first reaction step involves the formation of a hemiacetal intermediate between G3P and a cysteine residue, and this hemiacetal intermediate is then oxidized to a thioester, with concomitant reduction of NAD to NADH. The reduced NADH is then exchanged with the second NAD, and the thioester is attacked by a nucleophilic inorganic phosphate to produce BPG. The sequence is that of Glyceraldehyde-3-phosphate dehydrogenase 1 (gap1) from Streptomyces arenae.